The primary structure comprises 393 residues: Formate-dependent phosphoribosylglycinamide formyltransferase (393 aa).

Residues Glu-22–Leu-23 and Glu-82 each bind N(1)-(5-phospho-beta-D-ribosyl)glycinamide. ATP-binding positions include Arg-114, Lys-155, Ser-160–Gln-165, Glu-195–Ile-198, and Glu-203. In terms of domain architecture, ATP-grasp spans Arg-119–Leu-308. Residues Glu-267 and Glu-279 each contribute to the Mg(2+) site. Residues Asp-286, Lys-356, and Arg-363–Arg-364 each bind N(1)-(5-phospho-beta-D-ribosyl)glycinamide.

The protein belongs to the PurK/PurT family. Homodimer.

It catalyses the reaction N(1)-(5-phospho-beta-D-ribosyl)glycinamide + formate + ATP = N(2)-formyl-N(1)-(5-phospho-beta-D-ribosyl)glycinamide + ADP + phosphate + H(+). It participates in purine metabolism; IMP biosynthesis via de novo pathway; N(2)-formyl-N(1)-(5-phospho-D-ribosyl)glycinamide from N(1)-(5-phospho-D-ribosyl)glycinamide (formate route): step 1/1. Involved in the de novo purine biosynthesis. Catalyzes the transfer of formate to 5-phospho-ribosyl-glycinamide (GAR), producing 5-phospho-ribosyl-N-formylglycinamide (FGAR). Formate is provided by PurU via hydrolysis of 10-formyl-tetrahydrofolate. The chain is Formate-dependent phosphoribosylglycinamide formyltransferase from Azotobacter vinelandii (strain DJ / ATCC BAA-1303).